A 600-amino-acid chain; its full sequence is NADH-quinone oxidoreductase subunit C/D (600 aa).

The tract at residues 1–190 is NADH dehydrogenase I subunit C; that stretch reads MVNNMTDLTA…DPFELTKAKQ (190 aa). Residues 214–600 are NADH dehydrogenase I subunit D; sequence DFMFLNLGPN…IDFVMSDVDR (387 aa).

The protein in the N-terminal section; belongs to the complex I 30 kDa subunit family. This sequence in the C-terminal section; belongs to the complex I 49 kDa subunit family. As to quaternary structure, NDH-1 is composed of 13 different subunits. Subunits NuoB, CD, E, F, and G constitute the peripheral sector of the complex.

Its subcellular location is the cell inner membrane. It catalyses the reaction a quinone + NADH + 5 H(+)(in) = a quinol + NAD(+) + 4 H(+)(out). In terms of biological role, NDH-1 shuttles electrons from NADH, via FMN and iron-sulfur (Fe-S) centers, to quinones in the respiratory chain. The immediate electron acceptor for the enzyme in this species is believed to be ubiquinone. Couples the redox reaction to proton translocation (for every two electrons transferred, four hydrogen ions are translocated across the cytoplasmic membrane), and thus conserves the redox energy in a proton gradient. This Salmonella paratyphi C (strain RKS4594) protein is NADH-quinone oxidoreductase subunit C/D.